Consider the following 147-residue polypeptide: Transcriptional regulator MraZ (147 aa).

SpoVT-AbrB domains lie at 5–51 (GTPV…PQPV) and 80–123 (ACDV…DSEK).

Belongs to the MraZ family. Forms oligomers.

The protein localises to the cytoplasm. Its subcellular location is the nucleoid. The sequence is that of Transcriptional regulator MraZ from Nitrosospira multiformis (strain ATCC 25196 / NCIMB 11849 / C 71).